A 717-amino-acid polypeptide reads, in one-letter code: Fatty acid oxidation complex subunit alpha (717 aa).

Positions 1–189 are enoyl-CoA hydratase/isomerase; the sequence is MIYQSPTIEV…KVGAIDAVVA (189 aa). Aspartate 296 is a binding site for substrate. Positions 311–717 are 3-hydroxyacyl-CoA dehydrogenase; the sequence is KKVNSAAVLG…ANNGSYYQQA (407 aa). Residues methionine 324, aspartate 343, 400 to 402, lysine 407, and serine 429 contribute to the NAD(+) site; that span reads VVE. Histidine 450 functions as the For 3-hydroxyacyl-CoA dehydrogenase activity in the catalytic mechanism. Asparagine 453 is an NAD(+) binding site. Asparagine 500 and tyrosine 660 together coordinate substrate.

In the N-terminal section; belongs to the enoyl-CoA hydratase/isomerase family. The protein in the C-terminal section; belongs to the 3-hydroxyacyl-CoA dehydrogenase family. Heterotetramer of two alpha chains (FadB) and two beta chains (FadA).

It carries out the reaction a (3S)-3-hydroxyacyl-CoA + NAD(+) = a 3-oxoacyl-CoA + NADH + H(+). It catalyses the reaction a (3S)-3-hydroxyacyl-CoA = a (2E)-enoyl-CoA + H2O. The catalysed reaction is a 4-saturated-(3S)-3-hydroxyacyl-CoA = a (3E)-enoyl-CoA + H2O. The enzyme catalyses (3S)-3-hydroxybutanoyl-CoA = (3R)-3-hydroxybutanoyl-CoA. It carries out the reaction a (3Z)-enoyl-CoA = a 4-saturated (2E)-enoyl-CoA. It catalyses the reaction a (3E)-enoyl-CoA = a 4-saturated (2E)-enoyl-CoA. It functions in the pathway lipid metabolism; fatty acid beta-oxidation. In terms of biological role, involved in the aerobic and anaerobic degradation of long-chain fatty acids via beta-oxidation cycle. Catalyzes the formation of 3-oxoacyl-CoA from enoyl-CoA via L-3-hydroxyacyl-CoA. It can also use D-3-hydroxyacyl-CoA and cis-3-enoyl-CoA as substrate. This Shewanella pealeana (strain ATCC 700345 / ANG-SQ1) protein is Fatty acid oxidation complex subunit alpha.